Consider the following 218-residue polypeptide: UPF0502 protein Geob_1184 (218 aa).

Belongs to the UPF0502 family.

The chain is UPF0502 protein Geob_1184 from Geotalea daltonii (strain DSM 22248 / JCM 15807 / FRC-32) (Geobacter daltonii).